A 290-amino-acid chain; its full sequence is ATP synthase gamma chain (290 aa).

Belongs to the ATPase gamma chain family. In terms of assembly, F-type ATPases have 2 components, CF(1) - the catalytic core - and CF(0) - the membrane proton channel. CF(1) has five subunits: alpha(3), beta(3), gamma(1), delta(1), epsilon(1). CF(0) has three main subunits: a, b and c.

The protein resides in the cell inner membrane. Its function is as follows. Produces ATP from ADP in the presence of a proton gradient across the membrane. The gamma chain is believed to be important in regulating ATPase activity and the flow of protons through the CF(0) complex. This chain is ATP synthase gamma chain, found in Thiobacillus denitrificans (strain ATCC 25259 / T1).